The sequence spans 360 residues: UDP-3-O-acylglucosamine N-acyltransferase (360 aa).

Residue H256 is the Proton acceptor of the active site. The segment at 341–360 (EGSGAETAARPDDDRDEGRG) is disordered. The segment covering 349–360 (ARPDDDRDEGRG) has biased composition (basic and acidic residues).

Belongs to the transferase hexapeptide repeat family. LpxD subfamily. Homotrimer.

The enzyme catalyses a UDP-3-O-[(3R)-3-hydroxyacyl]-alpha-D-glucosamine + a (3R)-hydroxyacyl-[ACP] = a UDP-2-N,3-O-bis[(3R)-3-hydroxyacyl]-alpha-D-glucosamine + holo-[ACP] + H(+). It participates in bacterial outer membrane biogenesis; LPS lipid A biosynthesis. Its function is as follows. Catalyzes the N-acylation of UDP-3-O-acylglucosamine using 3-hydroxyacyl-ACP as the acyl donor. Is involved in the biosynthesis of lipid A, a phosphorylated glycolipid that anchors the lipopolysaccharide to the outer membrane of the cell. This is UDP-3-O-acylglucosamine N-acyltransferase from Rhodopseudomonas palustris (strain ATCC BAA-98 / CGA009).